A 475-amino-acid chain; its full sequence is Sulfate adenylyltransferase subunit 1 (475 aa).

The region spanning 25–239 (KSLLRFLTCG…EVLETVEIQR (215 aa)) is the tr-type G domain. A G1 region spans residues 34-41 (GSVDDGKS). 34–41 (GSVDDGKS) serves as a coordination point for GTP. The interval 92–96 (GITID) is G2. Residues 113–116 (DTPG) form a G3 region. GTP is bound by residues 113–117 (DTPGH) and 168–171 (NKMD). The segment at 168 to 171 (NKMD) is G4. A G5 region spans residues 206–208 (SAL).

The protein belongs to the TRAFAC class translation factor GTPase superfamily. Classic translation factor GTPase family. CysN/NodQ subfamily. In terms of assembly, heterodimer composed of CysD, the smaller subunit, and CysN.

It catalyses the reaction sulfate + ATP + H(+) = adenosine 5'-phosphosulfate + diphosphate. It participates in sulfur metabolism; hydrogen sulfide biosynthesis; sulfite from sulfate: step 1/3. Its function is as follows. With CysD forms the ATP sulfurylase (ATPS) that catalyzes the adenylation of sulfate producing adenosine 5'-phosphosulfate (APS) and diphosphate, the first enzymatic step in sulfur assimilation pathway. APS synthesis involves the formation of a high-energy phosphoric-sulfuric acid anhydride bond driven by GTP hydrolysis by CysN coupled to ATP hydrolysis by CysD. In Escherichia coli O157:H7, this protein is Sulfate adenylyltransferase subunit 1.